The sequence spans 162 residues: EF-hand calcium-binding domain-containing protein 11 (162 aa).

EF-hand domains are found at residues 18–53, 91–126, and 127–162; these read SERR…LFGY, LYRN…VAPK, and LPSR…GKAK. D140, D142, D144, H146, and D151 together coordinate Ca(2+).

The chain is EF-hand calcium-binding domain-containing protein 11 (Efcab11) from Rattus norvegicus (Rat).